Reading from the N-terminus, the 106-residue chain is ATP-dependent Clp protease adapter protein ClpS (106 aa).

This sequence belongs to the ClpS family. Binds to the N-terminal domain of the chaperone ClpA.

Involved in the modulation of the specificity of the ClpAP-mediated ATP-dependent protein degradation. The chain is ATP-dependent Clp protease adapter protein ClpS from Sodalis glossinidius (strain morsitans).